Here is a 304-residue protein sequence, read N- to C-terminus: N-acetyl-D-glucosamine kinase (304 aa).

Residues 4–11 (GFDIGGTK) and 133–140 (GFGGGLIF) contribute to the ATP site. Zn(2+)-binding residues include His157, Cys178, Cys180, and Cys185.

It belongs to the ROK (NagC/XylR) family. NagK subfamily.

The catalysed reaction is N-acetyl-D-glucosamine + ATP = N-acetyl-D-glucosamine 6-phosphate + ADP + H(+). Its pathway is cell wall biogenesis; peptidoglycan recycling. Functionally, catalyzes the phosphorylation of N-acetyl-D-glucosamine (GlcNAc) derived from cell-wall degradation, yielding GlcNAc-6-P. This Mannheimia succiniciproducens (strain KCTC 0769BP / MBEL55E) protein is N-acetyl-D-glucosamine kinase.